Consider the following 709-residue polypeptide: DNA topoisomerase 1 (709 aa).

Residues 3-127 (KNLVVIESPN…KCKRITFNEI (125 aa)) form the Toprim domain. E9 and D95 together coordinate Mg(2+). The region spanning 143–598 (DLNWVESQFA…FWTNFKSDVK (456 aa)) is the Topo IA-type catalytic domain. The interval 176-181 (SAGRVQ) is interaction with DNA. The active-site O-(5'-phospho-DNA)-tyrosine intermediate is Y334. C4-type zinc fingers lie at residues 618–646 (CPKC…FPKC) and 667–696 (CPEC…FPNC).

This sequence belongs to the type IA topoisomerase family. As to quaternary structure, monomer. It depends on Mg(2+) as a cofactor.

It carries out the reaction ATP-independent breakage of single-stranded DNA, followed by passage and rejoining.. Functionally, releases the supercoiling and torsional tension of DNA, which is introduced during the DNA replication and transcription, by transiently cleaving and rejoining one strand of the DNA duplex. Introduces a single-strand break via transesterification at a target site in duplex DNA. The scissile phosphodiester is attacked by the catalytic tyrosine of the enzyme, resulting in the formation of a DNA-(5'-phosphotyrosyl)-enzyme intermediate and the expulsion of a 3'-OH DNA strand. The free DNA strand then undergoes passage around the unbroken strand, thus removing DNA supercoils. Finally, in the religation step, the DNA 3'-OH attacks the covalent intermediate to expel the active-site tyrosine and restore the DNA phosphodiester backbone. The polypeptide is DNA topoisomerase 1 (Mycoplasma genitalium (strain ATCC 33530 / DSM 19775 / NCTC 10195 / G37) (Mycoplasmoides genitalium)).